Reading from the N-terminus, the 103-residue chain is Auxin-responsive protein SAUR50 (103 aa).

The protein belongs to the ARG7 family.

Functionally, effector of hormonal and environmental signals in plant growth. Involved in heliotropism. The chain is Auxin-responsive protein SAUR50 from Helianthus annuus (Common sunflower).